The chain runs to 334 residues: D-aspartate oxidase 2 (334 aa).

FAD-binding residues include aspartate 38, lysine 39, serine 46, glycine 310, and threonine 315.

This sequence belongs to the DAMOX/DASOX family. The cofactor is FAD. Expressed in the intestinal cells, pharyngeal muscles, and body wall muscles in adult hermaphrodites.

The protein localises to the cytoplasm. The enzyme catalyses D-aspartate + O2 + H2O = oxaloacetate + H2O2 + NH4(+). The catalysed reaction is D-glutamate + O2 + H2O = H2O2 + 2-oxoglutarate + NH4(+). With respect to regulation, inhibited by thiolactomycin. Functionally, selectively catalyzes the oxidative deamination of acidic amino acids. May play a role in the egg-laying events and early development of the worm, in addition to quality control of the germ cells. The chain is D-aspartate oxidase 2 (ddo-2) from Caenorhabditis elegans.